Reading from the N-terminus, the 255-residue chain is Ras-like protein family member 12 (255 aa).

GTP-binding positions include 30-37, 77-81, and 137-140; these read GAMGSGKS, DTADQ, and NKVD.

It belongs to the small GTPase superfamily. Ras family.

The catalysed reaction is GTP + H2O = GDP + phosphate + H(+). The polypeptide is Ras-like protein family member 12 (RASL12) (Danio rerio (Zebrafish)).